Here is a 245-residue protein sequence, read N- to C-terminus: Ribonuclease PH (245 aa).

Phosphate-binding positions include Arg93 and 131 to 133; that span reads GTR.

It belongs to the RNase PH family. In terms of assembly, homohexameric ring arranged as a trimer of dimers.

It carries out the reaction tRNA(n+1) + phosphate = tRNA(n) + a ribonucleoside 5'-diphosphate. Phosphorolytic 3'-5' exoribonuclease that plays an important role in tRNA 3'-end maturation. Removes nucleotide residues following the 3'-CCA terminus of tRNAs; can also add nucleotides to the ends of RNA molecules by using nucleoside diphosphates as substrates, but this may not be physiologically important. Probably plays a role in initiation of 16S rRNA degradation (leading to ribosome degradation) during starvation. The protein is Ribonuclease PH of Corynebacterium glutamicum (strain R).